The primary structure comprises 448 residues: GTPase Der (448 aa).

EngA-type G domains are found at residues 3-167 and 182-355; these read PVIA…EPPE and TRLA…ASAT. GTP contacts are provided by residues 9–16, 56–60, 119–122, 188–195, 235–239, and 300–303; these read GRPNVGKS, DTGGF, NKAE, DTAGL, and NKWD. The region spanning 356 to 440 is the KH-like domain; that stretch reads RKLPTPQLTR…PMRIELRASH (85 aa).

It belongs to the TRAFAC class TrmE-Era-EngA-EngB-Septin-like GTPase superfamily. EngA (Der) GTPase family. Associates with the 50S ribosomal subunit.

In terms of biological role, GTPase that plays an essential role in the late steps of ribosome biogenesis. The polypeptide is GTPase Der (Leptothrix cholodnii (strain ATCC 51168 / LMG 8142 / SP-6) (Leptothrix discophora (strain SP-6))).